Consider the following 142-residue polypeptide: Peptide methionine sulfoxide reductase MsrB (142 aa).

The MsrB domain occupies 2 to 125 (LKKDKSELTD…NSAAIQFIPY (124 aa)). Residue Cys-114 is the Nucleophile of the active site.

The protein belongs to the MsrB Met sulfoxide reductase family.

The enzyme catalyses L-methionyl-[protein] + [thioredoxin]-disulfide + H2O = L-methionyl-(R)-S-oxide-[protein] + [thioredoxin]-dithiol. In Staphylococcus aureus (strain USA300), this protein is Peptide methionine sulfoxide reductase MsrB.